A 218-amino-acid chain; its full sequence is Probable GTP-binding protein EngB (218 aa).

An EngB-type G domain is found at 21–192; that stretch reads NAPQIALAGR…WQELHRLAFP (172 aa). GTP contacts are provided by residues 29 to 36, 56 to 60, 75 to 78, 142 to 145, and 171 to 173; these read GRSNVGKS, GKTRS, DLPG, TKAD, and FSS. 2 residues coordinate Mg(2+): Ser-36 and Thr-58. The interval 194–218 is disordered; sequence MAFDTPSDGAPEPADEPEAASERAE.

The protein belongs to the TRAFAC class TrmE-Era-EngA-EngB-Septin-like GTPase superfamily. EngB GTPase family. The cofactor is Mg(2+).

Its function is as follows. Necessary for normal cell division and for the maintenance of normal septation. This is Probable GTP-binding protein EngB from Oleidesulfovibrio alaskensis (strain ATCC BAA-1058 / DSM 17464 / G20) (Desulfovibrio alaskensis).